A 113-amino-acid chain; its full sequence is Small ribosomal subunit protein uS17 (113 aa).

It belongs to the universal ribosomal protein uS17 family. As to quaternary structure, part of the 30S ribosomal subunit.

Functionally, one of the primary rRNA binding proteins, it binds specifically to the 5'-end of 16S ribosomal RNA. The sequence is that of Small ribosomal subunit protein uS17 from Nanoarchaeum equitans (strain Kin4-M).